The sequence spans 90 residues: DNA-binding protein HU (90 aa).

Belongs to the bacterial histone-like protein family. As to quaternary structure, homodimer.

Its function is as follows. Histone-like DNA-binding protein which is capable of wrapping DNA to stabilize it, and thus to prevent its denaturation under extreme environmental conditions. This is DNA-binding protein HU (hup) from Pasteurella multocida (strain Pm70).